The primary structure comprises 365 residues: Flagellar P-ring protein (365 aa).

The N-terminal stretch at 1-22 is a signal peptide; that stretch reads MSVRRFLVWILALTVGAAPVMA.

The protein belongs to the FlgI family. As to quaternary structure, the basal body constitutes a major portion of the flagellar organelle and consists of four rings (L,P,S, and M) mounted on a central rod.

It localises to the periplasm. It is found in the bacterial flagellum basal body. Assembles around the rod to form the L-ring and probably protects the motor/basal body from shearing forces during rotation. This is Flagellar P-ring protein from Marinobacter nauticus (strain ATCC 700491 / DSM 11845 / VT8) (Marinobacter aquaeolei).